The following is a 254-amino-acid chain: Caffeoyl-CoA O-methyltransferase (254 aa).

Residues Met1–Val25 form a disordered region. Residues Glu7–Val25 show a composition bias toward basic and acidic residues. A substrate-binding site is contributed by Lys28. S-adenosyl-L-methionine is bound by residues Thr70, Glu92, Gly94–Val95, Ser100, Asp118, and Ala147. Asp170 is a binding site for substrate. Asp170 is a binding site for a divalent metal cation. An S-adenosyl-L-methionine-binding site is contributed by Asp172. Asp196 and Asn197 together coordinate a divalent metal cation. A substrate-binding site is contributed by Asn201.

Belongs to the class I-like SAM-binding methyltransferase superfamily. Cation-dependent O-methyltransferase family. CCoAMT subfamily. It depends on a divalent metal cation as a cofactor.

It carries out the reaction (E)-caffeoyl-CoA + S-adenosyl-L-methionine = (E)-feruloyl-CoA + S-adenosyl-L-homocysteine + H(+). The protein operates within aromatic compound metabolism; phenylpropanoid biosynthesis. Its function is as follows. Methylates caffeoyl-CoA to feruloyl-CoA and 5-hydroxyferuloyl-CoA to sinapoyl-CoA. Plays a role in the synthesis of feruloylated polysaccharides. Involved in the reinforcement of the plant cell wall. Also involved in the responding to wounding or pathogen challenge by the increased formation of cell wall-bound ferulic acid polymers. The sequence is that of Caffeoyl-CoA O-methyltransferase from Mesembryanthemum crystallinum (Common ice plant).